Reading from the N-terminus, the 252-residue chain is Probable endonuclease 4 (252 aa).

Residues histidine 56, histidine 96, glutamate 129, aspartate 162, histidine 165, histidine 191, aspartate 204, histidine 206, and glutamate 233 each coordinate Zn(2+).

The protein belongs to the AP endonuclease 2 family. It depends on Zn(2+) as a cofactor.

The catalysed reaction is Endonucleolytic cleavage to 5'-phosphooligonucleotide end-products.. Endonuclease IV plays a role in DNA repair. It cleaves phosphodiester bonds at apurinic or apyrimidinic (AP) sites, generating a 3'-hydroxyl group and a 5'-terminal sugar phosphate. The sequence is that of Probable endonuclease 4 from Mycobacterium tuberculosis (strain ATCC 25177 / H37Ra).